The chain runs to 504 residues: GTPase Der (504 aa).

The 165-residue stretch at 4–168 (PVVALVGRPN…QVLAPFAEKM (165 aa)) folds into the EngA-type G 1 domain. Residues 10-17 (GRPNVGKS), 57-61 (DTGGI), and 120-123 (NKTD) each bind GTP. Over residues 168–179 (MENADENDRTSE) the composition is skewed to basic and acidic residues. Residues 168-191 (MENADENDRTSEEEQDEWEQEFDF) are disordered. Over residues 180–191 (EEQDEWEQEFDF) the composition is skewed to acidic residues. Residues 216–389 (IKIAIVGRPN…SIKEAYACAT (174 aa)) enclose the EngA-type G 2 domain. GTP is bound by residues 222 to 229 (GRPNVGKS), 269 to 273 (DTAGV), and 334 to 337 (NKWD). The region spanning 390–474 (QKMTTSLLTR…PIRLLFQEGS (85 aa)) is the KH-like domain.

Belongs to the TRAFAC class TrmE-Era-EngA-EngB-Septin-like GTPase superfamily. EngA (Der) GTPase family. As to quaternary structure, associates with the 50S ribosomal subunit.

Functionally, GTPase that plays an essential role in the late steps of ribosome biogenesis. The chain is GTPase Der from Haemophilus influenzae (strain ATCC 51907 / DSM 11121 / KW20 / Rd).